The chain runs to 76 residues: Acyl carrier protein (76 aa).

The Carrier domain maps to 1–76; sequence MSVEEKVKKI…DAIDYIAGKQ (76 aa). Position 36 is an O-(pantetheine 4'-phosphoryl)serine (Ser36).

The protein belongs to the acyl carrier protein (ACP) family. In terms of processing, 4'-phosphopantetheine is transferred from CoA to a specific serine of apo-ACP by AcpS. This modification is essential for activity because fatty acids are bound in thioester linkage to the sulfhydryl of the prosthetic group.

The protein resides in the cytoplasm. Its pathway is lipid metabolism; fatty acid biosynthesis. Its function is as follows. Carrier of the growing fatty acid chain in fatty acid biosynthesis. This Oleidesulfovibrio alaskensis (strain ATCC BAA-1058 / DSM 17464 / G20) (Desulfovibrio alaskensis) protein is Acyl carrier protein.